A 704-amino-acid chain; its full sequence is MQNSEGGADSPASVALRPSAAAPPVPASPQRVLVQAASSAPKGAQMQPISLPRVQQVPQQVQPVQHVYPAQVQYAEGGDAVYTNGAIRTAYTYNPEPQMYAPSSAASYFEAPGGAQVTVAASSPPAVPSHSMVGITMDVGGSPIVSSTGAYLIHGGMDSTRHSLAHTSRSSPATLEMAIENLQKSEGITSHKSGLLNSHLQWLLDNYETAEGVSLPRSSLYNHYLRHCQEHKLDPVNAASFGKLIRSVFMGLRTRRLGTRGNSKYHYYGIRLKPDSPLNRLQEDTQYMAMRQQPMHQKPRYRPAQKTDSLGDSSSHSGLHSTPEQTTAAQNQHHQQYIDVSHVFPEFPAPDLGSVLLQDGVTLHDVKALQLVYRRHCEATVDVVMNLQFHYIEKLWLSFWNSKASSSDGPTSLPASDEDPEGAVLPKDKLISLCQCDPILRWMRSCDHILYQALVEILIPDVLRPVPSTLTQAIRNFAKSLEGWLTNAMSDFPQQVIQTKVGVVSAFAQTLRRYTSLNHLAQAARAVLQNTSQINQMLSDLNRVDFANVQEQASWVCQCEESVVQRLEQDFKLTLQQQSSLDQWASWLDSVVTQVLKQHAGSPSFPKAARQFLLKWSFYSSMVIRDLTLRSAASFGSFHLIRLLYDEYMFYLVEHRVAEATGETPIAVMGERLSQNVTSALWPGSEPGSSPGELCSSAWLATLC.

Residues 1 to 39 (MQNSEGGADSPASVALRPSAAAPPVPASPQRVLVQAASS) form a disordered region. Positions 10–20 (SPASVALRPSA) are enriched in low complexity. Residue Ser-28 is modified to Phosphoserine. The RFX-type winged-helix DNA-binding region spans 199 to 274 (HLQWLLDNYE…YHYYGIRLKP (76 aa)). Residues 292 to 334 (QQPMHQKPRYRPAQKTDSLGDSSSHSGLHSTPEQTTAAQNQHH) are disordered. Residues 307-334 (TDSLGDSSSHSGLHSTPEQTTAAQNQHH) are compositionally biased toward low complexity. Ser-416 is subject to Phosphoserine.

Belongs to the RFX family. As to quaternary structure, homodimer; probably only forms homodimers in testis. Heterodimer; heterodimerizes with RFX1 and RFX3.

The protein localises to the nucleus. It localises to the cytoplasm. Functionally, transcription factor that acts as a key regulator of spermatogenesis. Acts by regulating expression of genes required for the haploid phase during spermiogenesis, such as genes required for cilium assembly and function. Recognizes and binds the X-box, a regulatory motif with DNA sequence 5'-GTNRCC(0-3N)RGYAAC-3' present on promoters. Probably activates transcription of the testis-specific histone gene H1-6. The protein is DNA-binding protein RFX2 (RFX2) of Pongo abelii (Sumatran orangutan).